The primary structure comprises 333 residues: Biotin synthase (333 aa).

In terms of domain architecture, Radical SAM core spans 51 to 278 (RAIQLSTLMS…KSYVRLSAGR (228 aa)). [4Fe-4S] cluster is bound by residues Cys-66, Cys-70, and Cys-73. [2Fe-2S] cluster is bound by residues Cys-110, Cys-141, Cys-201, and Arg-273.

It belongs to the radical SAM superfamily. Biotin synthase family. Homodimer. [4Fe-4S] cluster is required as a cofactor. The cofactor is [2Fe-2S] cluster.

It carries out the reaction (4R,5S)-dethiobiotin + (sulfur carrier)-SH + 2 reduced [2Fe-2S]-[ferredoxin] + 2 S-adenosyl-L-methionine = (sulfur carrier)-H + biotin + 2 5'-deoxyadenosine + 2 L-methionine + 2 oxidized [2Fe-2S]-[ferredoxin]. It participates in cofactor biosynthesis; biotin biosynthesis; biotin from 7,8-diaminononanoate: step 2/2. Catalyzes the conversion of dethiobiotin (DTB) to biotin by the insertion of a sulfur atom into dethiobiotin via a radical-based mechanism. This chain is Biotin synthase, found in Haemophilus influenzae (strain 86-028NP).